Here is a 413-residue protein sequence, read N- to C-terminus: Putative competence-damage inducible protein (413 aa).

This sequence belongs to the CinA family.

This Halothermothrix orenii (strain H 168 / OCM 544 / DSM 9562) protein is Putative competence-damage inducible protein.